Here is a 333-residue protein sequence, read N- to C-terminus: Adenosine deaminase (333 aa).

2 residues coordinate Zn(2+): histidine 12 and histidine 14. Residues histidine 14, aspartate 16, and glycine 170 each coordinate substrate. Residue histidine 197 participates in Zn(2+) binding. Glutamate 200 acts as the Proton donor in catalysis. Zn(2+) is bound at residue aspartate 278. Aspartate 279 is a binding site for substrate.

Belongs to the metallo-dependent hydrolases superfamily. Adenosine and AMP deaminases family. Adenosine deaminase subfamily. Zn(2+) serves as cofactor.

The catalysed reaction is adenosine + H2O + H(+) = inosine + NH4(+). It carries out the reaction 2'-deoxyadenosine + H2O + H(+) = 2'-deoxyinosine + NH4(+). Catalyzes the hydrolytic deamination of adenosine and 2-deoxyadenosine. The chain is Adenosine deaminase from Salmonella schwarzengrund (strain CVM19633).